The sequence spans 340 residues: S-adenosylmethionine:tRNA ribosyltransferase-isomerase (340 aa).

The protein belongs to the QueA family. As to quaternary structure, monomer.

The protein resides in the cytoplasm. It catalyses the reaction 7-aminomethyl-7-carbaguanosine(34) in tRNA + S-adenosyl-L-methionine = epoxyqueuosine(34) in tRNA + adenine + L-methionine + 2 H(+). Its pathway is tRNA modification; tRNA-queuosine biosynthesis. Transfers and isomerizes the ribose moiety from AdoMet to the 7-aminomethyl group of 7-deazaguanine (preQ1-tRNA) to give epoxyqueuosine (oQ-tRNA). This chain is S-adenosylmethionine:tRNA ribosyltransferase-isomerase, found in Francisella tularensis subsp. tularensis (strain FSC 198).